Reading from the N-terminus, the 237-residue chain is UDP-2,3-diacylglucosamine hydrolase (237 aa).

5 residues coordinate Mn(2+): Asp-8, His-10, Asp-41, Asn-78, and His-113. 78 to 79 (NR) is a substrate binding site. The substrate site is built by Asp-121, Ser-159, Gln-164, and His-195. His-195 and His-197 together coordinate Mn(2+).

It belongs to the LpxH family. Mn(2+) serves as cofactor.

Its subcellular location is the cell inner membrane. The enzyme catalyses UDP-2-N,3-O-bis[(3R)-3-hydroxytetradecanoyl]-alpha-D-glucosamine + H2O = 2-N,3-O-bis[(3R)-3-hydroxytetradecanoyl]-alpha-D-glucosaminyl 1-phosphate + UMP + 2 H(+). The protein operates within glycolipid biosynthesis; lipid IV(A) biosynthesis; lipid IV(A) from (3R)-3-hydroxytetradecanoyl-[acyl-carrier-protein] and UDP-N-acetyl-alpha-D-glucosamine: step 4/6. Functionally, hydrolyzes the pyrophosphate bond of UDP-2,3-diacylglucosamine to yield 2,3-diacylglucosamine 1-phosphate (lipid X) and UMP by catalyzing the attack of water at the alpha-P atom. Involved in the biosynthesis of lipid A, a phosphorylated glycolipid that anchors the lipopolysaccharide to the outer membrane of the cell. The polypeptide is UDP-2,3-diacylglucosamine hydrolase (Chromobacterium violaceum (strain ATCC 12472 / DSM 30191 / JCM 1249 / CCUG 213 / NBRC 12614 / NCIMB 9131 / NCTC 9757 / MK)).